The primary structure comprises 244 residues: tRNA pseudouridine synthase B (244 aa).

Asp46 functions as the Nucleophile in the catalytic mechanism.

The protein belongs to the pseudouridine synthase TruB family. Type 1 subfamily.

It catalyses the reaction uridine(55) in tRNA = pseudouridine(55) in tRNA. Functionally, responsible for synthesis of pseudouridine from uracil-55 in the psi GC loop of transfer RNAs. The polypeptide is tRNA pseudouridine synthase B (Bordetella bronchiseptica (strain ATCC BAA-588 / NCTC 13252 / RB50) (Alcaligenes bronchisepticus)).